A 417-amino-acid chain; its full sequence is UDP-N-acetylglucosamine 1-carboxyvinyltransferase (417 aa).

A phosphoenolpyruvate-binding site is contributed by 22 to 23 (KN). R92 is a binding site for UDP-N-acetyl-alpha-D-glucosamine. Catalysis depends on C116, which acts as the Proton donor. At C116 the chain carries 2-(S-cysteinyl)pyruvic acid O-phosphothioketal. Residues 161-164 (KVSV), D305, and I327 contribute to the UDP-N-acetyl-alpha-D-glucosamine site.

Belongs to the EPSP synthase family. MurA subfamily.

Its subcellular location is the cytoplasm. The enzyme catalyses phosphoenolpyruvate + UDP-N-acetyl-alpha-D-glucosamine = UDP-N-acetyl-3-O-(1-carboxyvinyl)-alpha-D-glucosamine + phosphate. Its pathway is cell wall biogenesis; peptidoglycan biosynthesis. In terms of biological role, cell wall formation. Adds enolpyruvyl to UDP-N-acetylglucosamine. In Pelagibacter ubique (strain HTCC1062), this protein is UDP-N-acetylglucosamine 1-carboxyvinyltransferase.